Consider the following 527-residue polypeptide: MTTQAAEVAKRRTFAIISHPDAGKTTITEKLLLMGKAIAVAGTVKSRKSDRHATSDWMEMEKQRGISITTSVMQFPYREHMINLLDTPGHEDFSEDTYRTLTAVDSALMVLDGGKGVEPRTIALMEVCRLRDTPIVSFINKLDRDIRDPIELLDEIEAVLKIKAAPITWPIGCYKDFKGVYHLADDKIIVYVPGHGHERIETKIIDKLDSDEARAHLGDLYDNFVEQLELVQGACHTFDKDAFLKGEMTPVFFGTALGNFGVDQVLDCIVDWAPQPLSRATHERNVEPTEEKFSGFVFKIQANMDPKHRDRIAFMRICSGKYEKGMKMRHVRLGKDVKIADALTFFSSEREQLEEAYAGDIIGLHNHGTIQIGDTFSEGENFGFTGIPHFAPELFRRVRLKDPLKSKQLRQGLQELAEEGATQVFFPERNNDIILGAVGVLQFDVVASRLKEEYKVECAYEAINVWSARWIECDDEKKLKEFQDKAFENLSVDGGGHLTYLAPTRVNLSLMEERWPDIRFRATREHH.

Residues 9–277 form the tr-type G domain; that stretch reads AKRRTFAIIS…CIVDWAPQPL (269 aa). Residues 18-25, 86-90, and 140-143 each bind GTP; these read SHPDAGKT, DTPGH, and NKLD.

It belongs to the TRAFAC class translation factor GTPase superfamily. Classic translation factor GTPase family. PrfC subfamily.

The protein resides in the cytoplasm. Functionally, increases the formation of ribosomal termination complexes and stimulates activities of RF-1 and RF-2. It binds guanine nucleotides and has strong preference for UGA stop codons. It may interact directly with the ribosome. The stimulation of RF-1 and RF-2 is significantly reduced by GTP and GDP, but not by GMP. This is Peptide chain release factor 3 from Pseudomonas paraeruginosa (strain DSM 24068 / PA7) (Pseudomonas aeruginosa (strain PA7)).